The sequence spans 430 residues: Trigger factor (430 aa).

The PPIase FKBP-type domain maps to 157–242; it reads GDLVALETWS…AVEVSEPVLP (86 aa).

Belongs to the FKBP-type PPIase family. Tig subfamily.

The protein localises to the cytoplasm. The catalysed reaction is [protein]-peptidylproline (omega=180) = [protein]-peptidylproline (omega=0). Its function is as follows. Involved in protein export. Acts as a chaperone by maintaining the newly synthesized protein in an open conformation. Functions as a peptidyl-prolyl cis-trans isomerase. The protein is Trigger factor of Xanthomonas campestris pv. campestris (strain B100).